Reading from the N-terminus, the 386-residue chain is uncharacterized protein (386 aa).

2 helical membrane passes run 54–74 (AVLQ…AIVA) and 347–367 (LLGG…PIAG).

This sequence to M.tuberculosis Rv0628c.

The protein localises to the cell membrane. This is an uncharacterized protein from Mycobacterium tuberculosis (strain CDC 1551 / Oshkosh).